The chain runs to 363 residues: Probable aminomethyltransferase (363 aa).

The protein belongs to the GcvT family. The glycine cleavage system is composed of four proteins: P, T, L and H.

It carries out the reaction N(6)-[(R)-S(8)-aminomethyldihydrolipoyl]-L-lysyl-[protein] + (6S)-5,6,7,8-tetrahydrofolate = N(6)-[(R)-dihydrolipoyl]-L-lysyl-[protein] + (6R)-5,10-methylene-5,6,7,8-tetrahydrofolate + NH4(+). Its function is as follows. The glycine cleavage system catalyzes the degradation of glycine. This is Probable aminomethyltransferase from Halobacterium salinarum (strain ATCC 29341 / DSM 671 / R1).